The sequence spans 330 residues: uncharacterized protein (330 aa).

Helical transmembrane passes span 15–35, 41–61, 72–92, 102–122, 125–145, 175–195, 201–221, 238–258, 264–284, and 286–306; these read LTLI…KGVL, FFVA…WAMG, GWGW…GFLA, LGSV…SWLF, VIGG…SLIG, LWML…PFVS, VVAT…IALV, LAYA…YLAS, SLSS…NLIL, and EQLS…IYLI. EamA domains follow at residues 22–146 and 182–308; these read FLWG…LIGL and LSMA…LINQ.

This sequence belongs to the EamA transporter family.

Its subcellular location is the cell membrane. This is an uncharacterized protein from Synechocystis sp. (strain ATCC 27184 / PCC 6803 / Kazusa).